Consider the following 224-residue polypeptide: Oxaloacetate tautomerase FAHD2, mitochondrial (224 aa).

A mitochondrion-targeting transit peptide spans 1–30 (MATSMIQRLFKQGTKIVGVGLNYASHAKEL). Residues E67, E69, and D98 each coordinate Mg(2+).

The protein belongs to the FAH family. Mg(2+) is required as a cofactor. The cofactor is Mn(2+).

Its subcellular location is the mitochondrion. The enzyme catalyses oxaloacetate = enol-oxaloacetate. In terms of biological role, tautomerase that converts enol-oxaloacetate, a strong inhibitor of succinate dehydrogenase, to the physiological keto form of oxaloacetate. In Arabidopsis thaliana (Mouse-ear cress), this protein is Oxaloacetate tautomerase FAHD2, mitochondrial.